A 645-amino-acid chain; its full sequence is Protein hrpC2 (645 aa).

The next 7 helical transmembrane spans lie at Val-18 to Pro-34, Leu-43 to Met-59, Leu-108 to Ile-124, Ile-201 to Val-217, Val-243 to Ile-259, Ala-285 to Val-301, and Leu-308 to Trp-324. The tract at residues Asp-334–Arg-354 is disordered.

The protein belongs to the FHIPEP (flagella/HR/invasion proteins export pore) family.

It localises to the cell inner membrane. Its function is as follows. Involved in the secretion of a proteinaceous elicitor of the hypersensitivity response in plants. The polypeptide is Protein hrpC2 (hrpC2) (Xanthomonas euvesicatoria).